The following is a 303-amino-acid chain: MKNLLSMEALTVHEIEHLLEQAAQFKRGKKATFNEQTFAVNMFFEPSTRTHTSFEVAEKKLGVEVVSFDAASSSMTKGETLYDTLLTMQAVGVNVAVIRHSEENYYAGLEKLDIAIVNGGDGCGEHPSQSLLDLFTIKEQFGTFQGLKVAIAGDIRHSRVANSNMKVLKRLGAELFFSGPREWFDESYLAYGTYLSVDEIVEKVDVLMLLRVQHERHSGTDEFTKESYHEKFGLTENRAKQLKEDAIIMHPSPVNRDVEIADSLVESEKSRIVTQMTNGVFIRMAILEAILKEQEMRAKLCTY.

Carbamoyl phosphate contacts are provided by Arg-49 and Thr-50. Lys-77 serves as a coordination point for L-aspartate. Carbamoyl phosphate contacts are provided by Arg-99, His-126, and Gln-129. The L-aspartate site is built by Arg-159 and Arg-211. Carbamoyl phosphate-binding residues include Ser-252 and Pro-253.

This sequence belongs to the aspartate/ornithine carbamoyltransferase superfamily. ATCase family. In terms of assembly, heterododecamer (2C3:3R2) of six catalytic PyrB chains organized as two trimers (C3), and six regulatory PyrI chains organized as three dimers (R2).

It carries out the reaction carbamoyl phosphate + L-aspartate = N-carbamoyl-L-aspartate + phosphate + H(+). It functions in the pathway pyrimidine metabolism; UMP biosynthesis via de novo pathway; (S)-dihydroorotate from bicarbonate: step 2/3. Functionally, catalyzes the condensation of carbamoyl phosphate and aspartate to form carbamoyl aspartate and inorganic phosphate, the committed step in the de novo pyrimidine nucleotide biosynthesis pathway. The protein is Aspartate carbamoyltransferase catalytic subunit of Listeria monocytogenes serotype 4b (strain F2365).